The primary structure comprises 372 residues: N-methyl-L-tryptophan oxidase (372 aa).

FAD is bound at residue 4–34; it reads DLIIIGSGSVGAAAGYYATRAGLNVLMTDAH. Cys-308 carries the post-translational modification S-8alpha-FAD cysteine.

This sequence belongs to the MSOX/MTOX family. MTOX subfamily. As to quaternary structure, monomer. FAD is required as a cofactor.

The enzyme catalyses N(alpha)-methyl-L-tryptophan + O2 + H2O = L-tryptophan + formaldehyde + H2O2. In terms of biological role, catalyzes the oxidative demethylation of N-methyl-L-tryptophan. In Escherichia coli O7:K1 (strain IAI39 / ExPEC), this protein is N-methyl-L-tryptophan oxidase.